Here is a 320-residue protein sequence, read N- to C-terminus: Ferrochelatase (320 aa).

2 residues coordinate Fe cation: His194 and Glu275.

This sequence belongs to the ferrochelatase family.

Its subcellular location is the cytoplasm. The catalysed reaction is heme b + 2 H(+) = protoporphyrin IX + Fe(2+). Its pathway is porphyrin-containing compound metabolism; protoheme biosynthesis; protoheme from protoporphyrin-IX: step 1/1. Its function is as follows. Catalyzes the ferrous insertion into protoporphyrin IX. The protein is Ferrochelatase of Serratia proteamaculans (strain 568).